Consider the following 735-residue polypeptide: E3 UFM1-protein ligase 1 homolog (735 aa).

Residues 389 to 445 form a disordered region; it reads RLEAEKKKQGGAKAAVKVQEETDDWGDGKKGGKGGKKNAKSVKGGSKSSAPSTSSNL. Residues 419–428 show a composition bias toward basic residues; it reads GGKGGKKNAK. Over residues 429–445 the composition is skewed to low complexity; it reads SVKGGSKSSAPSTSSNL.

The protein belongs to the UFL1 family.

Functionally, E3 UFM1-protein ligase that mediates ufmylation of target proteins. The chain is E3 UFM1-protein ligase 1 homolog (ufl-1) from Caenorhabditis elegans.